We begin with the raw amino-acid sequence, 118 residues long: Putative pterin-4-alpha-carbinolamine dehydratase (118 aa).

It belongs to the pterin-4-alpha-carbinolamine dehydratase family.

It catalyses the reaction (4aS,6R)-4a-hydroxy-L-erythro-5,6,7,8-tetrahydrobiopterin = (6R)-L-erythro-6,7-dihydrobiopterin + H2O. The polypeptide is Putative pterin-4-alpha-carbinolamine dehydratase (Xanthomonas campestris pv. campestris (strain 8004)).